The sequence spans 1393 residues: Protein strawberry notch homolog 1 (1393 aa).

The segment at 129–148 is disordered; that stretch reads STRPSVSAPTVRNAMTSAPS. Residue serine 148 is modified to Phosphoserine. Lysine 149 carries the post-translational modification N6-acetyllysine. Residues serine 162 and serine 214 each carry the phosphoserine modification. Position 413 is an N6-acetyllysine (lysine 413). The interval 687-840 is disordered; the sequence is APSNNSSPRD…ANSNTNSNSS (154 aa). Phosphoserine occurs at positions 692, 693, and 697. The span at 697 to 716 shows a compositional bias: basic and acidic residues; that stretch reads SPCKENKIKKRKGEEITREA. Over residues 733–747 the composition is skewed to acidic residues; that stretch reads SGSESDASDNEESDY. A phosphoserine mark is found at serine 754, serine 755, and serine 768. Residues 756–775 are compositionally biased toward acidic residues; the sequence is GDDDDFNPFLDESNEDDEND. Basic residues predominate over residues 781–793; sequence KDHKKNKEKKKKK. Residues serine 794 and serine 815 each carry the phosphoserine modification. The span at 824-840 shows a compositional bias: low complexity; that stretch reads PAPNSTPANSNTNSNSS. Residues 843-870 are a coiled coil; that stretch reads TSQDAVERAQQMKKDLLDKLEKLAEDLP. An N6-acetyllysine modification is found at lysine 1222. The residue at position 1386 (serine 1386) is a Phosphoserine.

Belongs to the SBNO family.

It is found in the nucleus. In terms of biological role, plays a crucial role in the regulation of neural stem cells (NSCs) proliferation. Enhances the phosphorylation of GSK3B through the PI3K-Akt signaling pathway, thereby upregulating the Wnt/beta-catenin signaling pathway and promoting the proliferation of NSCs. Improves ischemic stroke recovery while inhibiting neuroinflammation through small extracellular vesicles (sEVs)-mediated mechanism. Enhances the secretion of sEVs from NSCs, which in turn inhibit both the MAPK and NF-kappaB pathways in microglia. This inhibition suppresses the pro-inflammatory M1 polarization of microglia, promoting a shift towards the M2 anti-inflammatory phenotype, which is beneficial for reducing neuroinflammation. The protein is Protein strawberry notch homolog 1 (SBNO1) of Homo sapiens (Human).